Consider the following 319-residue polypeptide: Probable arabinan endo-1,5-alpha-L-arabinosidase C (319 aa).

The first 16 residues, 1-16, serve as a signal peptide directing secretion; sequence MFVYTLIFLFLAAANA. The active-site Proton acceptor is the Asp31. Asn190 carries an N-linked (GlcNAc...) asparagine glycan. The Proton donor role is filled by Glu198. Asn222 is a glycosylation site (N-linked (GlcNAc...) asparagine).

Belongs to the glycosyl hydrolase 43 family.

Its subcellular location is the secreted. The catalysed reaction is Endohydrolysis of (1-&gt;5)-alpha-arabinofuranosidic linkages in (1-&gt;5)-arabinans.. It functions in the pathway glycan metabolism; L-arabinan degradation. Its function is as follows. Endo-1,5-alpha-L-arabinanase involved in degradation of pectin. Its preferred substrate is linear 1,5-alpha-L-arabinan. The chain is Probable arabinan endo-1,5-alpha-L-arabinosidase C (abnC) from Aspergillus clavatus (strain ATCC 1007 / CBS 513.65 / DSM 816 / NCTC 3887 / NRRL 1 / QM 1276 / 107).